A 293-amino-acid polypeptide reads, in one-letter code: Phosphoribosylaminoimidazole-succinocarboxamide synthase (293 aa).

Belongs to the SAICAR synthetase family.

The catalysed reaction is 5-amino-1-(5-phospho-D-ribosyl)imidazole-4-carboxylate + L-aspartate + ATP = (2S)-2-[5-amino-1-(5-phospho-beta-D-ribosyl)imidazole-4-carboxamido]succinate + ADP + phosphate + 2 H(+). It functions in the pathway purine metabolism; IMP biosynthesis via de novo pathway; 5-amino-1-(5-phospho-D-ribosyl)imidazole-4-carboxamide from 5-amino-1-(5-phospho-D-ribosyl)imidazole-4-carboxylate: step 1/2. The protein is Phosphoribosylaminoimidazole-succinocarboxamide synthase of Bordetella petrii (strain ATCC BAA-461 / DSM 12804 / CCUG 43448).